A 374-amino-acid chain; its full sequence is Ribosomal RNA large subunit methyltransferase G (374 aa).

This sequence belongs to the methyltransferase superfamily. RlmG family.

It localises to the cytoplasm. The catalysed reaction is guanosine(1835) in 23S rRNA + S-adenosyl-L-methionine = N(2)-methylguanosine(1835) in 23S rRNA + S-adenosyl-L-homocysteine + H(+). Its function is as follows. Specifically methylates the guanine in position 1835 (m2G1835) of 23S rRNA. The polypeptide is Ribosomal RNA large subunit methyltransferase G (Pseudomonas syringae pv. tomato (strain ATCC BAA-871 / DC3000)).